We begin with the raw amino-acid sequence, 484 residues long: Probable metalloprotease ARX1 (484 aa).

This sequence belongs to the peptidase M24 family. As to quaternary structure, component of the nucleoplasmic and cytoplasmic pre-60S ribosomal particles.

The protein localises to the cytoplasm. Its subcellular location is the nucleus. Probable metalloprotease involved in proper assembly of pre-ribosomal particles during the biogenesis of the 60S ribosomal subunit. Accompanies the pre-60S particles to the cytoplasm. This chain is Probable metalloprotease ARX1 (ARX1), found in Yarrowia lipolytica (strain CLIB 122 / E 150) (Yeast).